Consider the following 239-residue polypeptide: TPR repeat-containing protein TP_0282 (239 aa).

Residues 21-43 traverse the membrane as a helical segment; it reads LLVGVLVAILGGLGLSAGCLLVM. TPR repeat units lie at residues 112-145 and 149-182; these read AYAQ…ARRS and GVYY…QDFP.

It localises to the cell membrane. In Treponema pallidum (strain Nichols), this protein is TPR repeat-containing protein TP_0282.